The sequence spans 209 residues: Large ribosomal subunit protein bL25 (209 aa).

Positions 190–209 (LKSEEAASEGAAEEEAKDGE) are disordered. Residues 200–209 (AAEEEAKDGE) are compositionally biased toward acidic residues.

The protein belongs to the bacterial ribosomal protein bL25 family. CTC subfamily. In terms of assembly, part of the 50S ribosomal subunit; part of the 5S rRNA/L5/L18/L25 subcomplex. Contacts the 5S rRNA. Binds to the 5S rRNA independently of L5 and L18.

Its function is as follows. This is one of the proteins that binds to the 5S RNA in the ribosome where it forms part of the central protuberance. This chain is Large ribosomal subunit protein bL25, found in Brucella anthropi (strain ATCC 49188 / DSM 6882 / CCUG 24695 / JCM 21032 / LMG 3331 / NBRC 15819 / NCTC 12168 / Alc 37) (Ochrobactrum anthropi).